The sequence spans 459 residues: MRASILPLTLFLATLAGAQLSGPVGPLVDYSTKARNQTCNIIDYGAVADGKTDISQALLDAWGNCSVGGLVYIPPGNYSLAEDIELKHGQSSAIQLDGVVMRGHRGSYQMILIRDCNDFEFFSGNSRGAIQGFGYEYLQNDTYGERLLRIQEVNNFSVHGFALIDSPSYYIVFDTVTSGEVYNILIRGVTSVGATDAIDVWGENMWFHDIEVSNGDECVTVKSPAHNYLIENIYCNLSGGTAIGSLGTGTNISDIHYRNLYMNQADACFLKSNNGDGIVKNIIWENVIVHGGPYPLAIDEAWGDDRGSVGVQVSNLTFRNWHGESVSASRPVIRLQCDSDVPCYDITIENVNLWANDSNYVVWQCENAYGDGACLSSAEGTKDLETFTSKQTITATPSYAAPTMAADFTFNLPSTSPFTIPPMPTSFYPGATPISTLLHLHGAGGLPSASPISHHRRHQ.

Positions 1–18 (MRASILPLTLFLATLAGA) are cleaved as a signal peptide. N-linked (GlcNAc...) asparagine glycosylation is found at asparagine 36, asparagine 64, asparagine 77, asparagine 140, and asparagine 155. Cysteines 39 and 65 form a disulfide. Aspartate 216 functions as the Proton donor in the catalytic mechanism. Cysteine 218 and cysteine 235 are joined by a disulfide. Residues asparagine 236 and asparagine 251 are each glycosylated (N-linked (GlcNAc...) asparagine). The active site involves histidine 290. Asparagine 315 carries an N-linked (GlcNAc...) asparagine glycan. Cysteine 337 and cysteine 343 are disulfide-bonded. The N-linked (GlcNAc...) asparagine glycan is linked to asparagine 356. The cysteines at positions 365 and 374 are disulfide-linked.

This sequence belongs to the glycosyl hydrolase 28 family.

It localises to the secreted. In terms of biological role, pectinolytic enzymes consist of four classes of enzymes: pectine lyase, polygalacturonase, pectin methylesterase and rhamnogalacturonase. Hydrolyzes alpha-D-galacturonopyranosyl-(1,2)-alpha-L-rhamnopyranosyl linkages in the backbone of the hairy regions of pectins. The chain is Probable rhamnogalacturonase C (rhgC) from Aspergillus niger (strain ATCC MYA-4892 / CBS 513.88 / FGSC A1513).